The sequence spans 452 residues: MSKKVFIKTYGCQMNEYDSDKMSDVLGAAQGYEPTDNVEEADLILFNTCSVREKAQEKVFSDLGRVKHLKKKGALIGVGGCVASQEGAAIIERAPYVDVVFGPQTLHRLPQLLAERERLNRSQVDISFPEIEKFDHLPPARVEGASAFVSIMEGCSKYCSYCVVPYTRGEEVSRPFEDVLVEVAGLADQGVKEITLLGQNVNAWRSRMIGAASALSSEMADFATLLEYVSDIPGIERIRYVTSHPNEFTPSLIAAYDKLPKLVSHLHLPVQHGSDRILMAMKRGYTAMEYKSTVRKLRAIRPDMALSSDFIVGFPGETEDDFSKMMKLIDDVGFDNSFSFIFSPRPGTPAANLHDDTPHEVKLRRLQHLQTVINDSIKRISESRLGTVQRILVEGASKRDSTELMGRTECNRVVNFCGQPRLIGQMVDVAITETRSFTLRGEVVTQNEVLTG.

One can recognise an MTTase N-terminal domain in the interval 3–118; that stretch reads KKVFIKTYGC…LPQLLAERER (116 aa). The [4Fe-4S] cluster site is built by C12, C49, C81, C155, C159, and C162. Residues 141-379 enclose the Radical SAM core domain; the sequence is RVEGASAFVS…QTVINDSIKR (239 aa). A TRAM domain is found at 382–445; that stretch reads ESRLGTVQRI…SFTLRGEVVT (64 aa).

The protein belongs to the methylthiotransferase family. MiaB subfamily. Monomer. It depends on [4Fe-4S] cluster as a cofactor.

Its subcellular location is the cytoplasm. It catalyses the reaction N(6)-dimethylallyladenosine(37) in tRNA + (sulfur carrier)-SH + AH2 + 2 S-adenosyl-L-methionine = 2-methylsulfanyl-N(6)-dimethylallyladenosine(37) in tRNA + (sulfur carrier)-H + 5'-deoxyadenosine + L-methionine + A + S-adenosyl-L-homocysteine + 2 H(+). Its function is as follows. Catalyzes the methylthiolation of N6-(dimethylallyl)adenosine (i(6)A), leading to the formation of 2-methylthio-N6-(dimethylallyl)adenosine (ms(2)i(6)A) at position 37 in tRNAs that read codons beginning with uridine. This is tRNA-2-methylthio-N(6)-dimethylallyladenosine synthase from Albidiferax ferrireducens (strain ATCC BAA-621 / DSM 15236 / T118) (Rhodoferax ferrireducens).